A 487-amino-acid chain; its full sequence is Probable UDP-N-acetylglucosamine pyrophosphorylase (487 aa).

The Substrate binding motif lies at 105 to 108 (LAGG). Residues 105–108 (LAGG), Lys119, Gln198, and Gly225 each bind UTP. Asn226 serves as a coordination point for substrate. Residue Asp256 coordinates UTP. Residues 307-308 (EY) carry the Substrate binding motif. Lys382 is a UTP binding site. A substrate-binding site is contributed by Lys412.

Belongs to the UDPGP type 1 family.

The protein resides in the cytoplasm. The enzyme catalyses N-acetyl-alpha-D-glucosamine 1-phosphate + UTP + H(+) = UDP-N-acetyl-alpha-D-glucosamine + diphosphate. The protein operates within nucleotide-sugar biosynthesis; UDP-N-acetyl-alpha-D-glucosamine biosynthesis; UDP-N-acetyl-alpha-D-glucosamine from N-acetyl-alpha-D-glucosamine 1-phosphate: step 1/1. The polypeptide is Probable UDP-N-acetylglucosamine pyrophosphorylase (uap1) (Dictyostelium discoideum (Social amoeba)).